We begin with the raw amino-acid sequence, 689 residues long: Elongation factor G (689 aa).

The tr-type G domain occupies 8–282 (ERTRNIGIMA…GVVAYMPSPL (275 aa)). Residues 17–24 (AHIDAGKT), 81–85 (DTPGH), and 135–138 (NKMD) contribute to the GTP site.

Belongs to the TRAFAC class translation factor GTPase superfamily. Classic translation factor GTPase family. EF-G/EF-2 subfamily.

The protein localises to the cytoplasm. Its function is as follows. Catalyzes the GTP-dependent ribosomal translocation step during translation elongation. During this step, the ribosome changes from the pre-translocational (PRE) to the post-translocational (POST) state as the newly formed A-site-bound peptidyl-tRNA and P-site-bound deacylated tRNA move to the P and E sites, respectively. Catalyzes the coordinated movement of the two tRNA molecules, the mRNA and conformational changes in the ribosome. The polypeptide is Elongation factor G (Alkaliphilus metalliredigens (strain QYMF)).